Consider the following 534-residue polypeptide: MSEVSNEAARRRTFAIISHPDAGKTTLTEKLLLFGGAIQMAGSVKGRKAARHATSDWMALEKERGISVTSSVMQFPYEDKIVNLLDTPGHADFGEDTYRVLTAVDSALMVIDVAKGVEERTIKLMEVCRLRDTPIMTFINKLDREGKNPIDLLDEVETVLGIQCAPVTWPIGMGQRLKGVVHLITGEVHLYEQGRNFTRQDSTIFPSLDAPGLAEKIGTQMLDELREELELVQGASNPFDLDAYRAGQQTPVFFGSGVNNFGVQPLLDFFVEHAPPPQARDTTGRRVEAVEPKLSGFVFKIQANMDPQHRDRVAFMRVCSGKFTAGMKALHVRSGKDVKLANALTFMASDREIAAEAWPGDVIGIHNHGTISIGDTFTEGESLSFTGIPNFAPELFRRARLRDPLKLKQLQKGLAQLSEEGATQFFRPLMSNDLILGAVGVLQFDVVAYRLKDEYGVDAIFEPVSVTTARWVHCDNPKKLEEFREKNAGNLGIDAAGQLVYLAPTRVNLQLAQERAPDVRFSATREHAYATAVD.

In terms of domain architecture, tr-type G spans Ala9–Gln278. Residues Ser18–Thr25, Asp86–His90, and Asn140–Asp143 each bind GTP.

Belongs to the TRAFAC class translation factor GTPase superfamily. Classic translation factor GTPase family. PrfC subfamily.

Its subcellular location is the cytoplasm. Increases the formation of ribosomal termination complexes and stimulates activities of RF-1 and RF-2. It binds guanine nucleotides and has strong preference for UGA stop codons. It may interact directly with the ribosome. The stimulation of RF-1 and RF-2 is significantly reduced by GTP and GDP, but not by GMP. The protein is Peptide chain release factor 3 of Xanthomonas campestris pv. campestris (strain 8004).